Here is a 573-residue protein sequence, read N- to C-terminus: Urease subunit alpha (573 aa).

The region spanning 136 to 573 (GAIDCHVHLI…LPMAQRYFLF (438 aa)) is the Urease domain. Positions 141, 143, and 224 each coordinate Ni(2+). Lysine 224 is modified (N6-carboxylysine). Histidine 226 contributes to the substrate binding site. 2 residues coordinate Ni(2+): histidine 253 and histidine 279. Histidine 327 (proton donor) is an active-site residue. Residue aspartate 367 participates in Ni(2+) binding.

It belongs to the metallo-dependent hydrolases superfamily. Urease alpha subunit family. Heterotrimer of UreA (gamma), UreB (beta) and UreC (alpha) subunits. Three heterotrimers associate to form the active enzyme. It depends on Ni cation as a cofactor. Carboxylation allows a single lysine to coordinate two nickel ions.

The protein resides in the cytoplasm. It catalyses the reaction urea + 2 H2O + H(+) = hydrogencarbonate + 2 NH4(+). Its pathway is nitrogen metabolism; urea degradation; CO(2) and NH(3) from urea (urease route): step 1/1. This chain is Urease subunit alpha, found in Mycolicibacterium vanbaalenii (strain DSM 7251 / JCM 13017 / BCRC 16820 / KCTC 9966 / NRRL B-24157 / PYR-1) (Mycobacterium vanbaalenii).